The primary structure comprises 766 residues: 5-methyltetrahydropteroyltriglutamate--homocysteine methyltransferase (766 aa).

5-methyltetrahydropteroyltri-L-glutamate is bound by residues 16 to 19 (RELK) and Lys117. L-homocysteine contacts are provided by residues 442–444 (IGS) and Glu495. L-methionine is bound by residues 442-444 (IGS) and Glu495. 5-methyltetrahydropteroyltri-L-glutamate is bound by residues 526-527 (RC) and Trp572. Asp610 is an L-homocysteine binding site. Asp610 is an L-methionine binding site. 5-methyltetrahydropteroyltri-L-glutamate is bound at residue Glu616. Residues His652, Cys654, and Glu676 each coordinate Zn(2+). His705 serves as the catalytic Proton donor. Residue Cys737 participates in Zn(2+) binding.

The protein belongs to the vitamin-B12 independent methionine synthase family. Zn(2+) serves as cofactor.

The catalysed reaction is 5-methyltetrahydropteroyltri-L-glutamate + L-homocysteine = tetrahydropteroyltri-L-glutamate + L-methionine. The protein operates within amino-acid biosynthesis; L-methionine biosynthesis via de novo pathway; L-methionine from L-homocysteine (MetE route): step 1/1. In terms of biological role, catalyzes the transfer of a methyl group from 5-methyltetrahydrofolate to homocysteine resulting in methionine formation. In Bordetella avium (strain 197N), this protein is 5-methyltetrahydropteroyltriglutamate--homocysteine methyltransferase.